Reading from the N-terminus, the 437-residue chain is Eukaryotic peptide chain release factor subunit 1 (437 aa).

Residues 61–64 (NIKS) carry the NIKS motif; plays an important role in translational termination motif.

The protein belongs to the eukaryotic release factor 1 family. In terms of assembly, component of the eRF1-eRF3-GTP ternary complex, composed of ETF1/ERF1 and eRF3 (GSPT1/ERF3A or GSPT2/ERF3B) and GTP.

The protein resides in the cytoplasm. Its function is as follows. Component of the eRF1-eRF3-GTP ternary complex, a ternary complex that mediates translation termination in response to the termination codons. The eRF1-eRF3-GTP complex binds to a stop codon in the ribosomal A-site. ETF1/ERF1 is responsible for stop codon recognition and inducing hydrolysis of peptidyl-tRNA. Following GTP hydrolysis, eRF3 (GSPT1/ERF3A or GSPT2/ERF3B) dissociates, permitting ETF1/eRF1 to accommodate fully in the A-site, followed by hydrolysis of peptidyl-tRNA. This chain is Eukaryotic peptide chain release factor subunit 1 (etf1), found in Xenopus laevis (African clawed frog).